The following is a 657-amino-acid chain: tRNA uridine 5-carboxymethylaminomethyl modification enzyme MnmG (657 aa).

13 to 18 (GGGHAG) lines the FAD pocket. Position 281 to 295 (281 to 295 (GPRYCPSVEDKINRF)) interacts with NAD(+).

Belongs to the MnmG family. As to quaternary structure, homodimer. Heterotetramer of two MnmE and two MnmG subunits. The cofactor is FAD.

It localises to the cytoplasm. Its function is as follows. NAD-binding protein involved in the addition of a carboxymethylaminomethyl (cmnm) group at the wobble position (U34) of certain tRNAs, forming tRNA-cmnm(5)s(2)U34. The protein is tRNA uridine 5-carboxymethylaminomethyl modification enzyme MnmG of Acidovorax ebreus (strain TPSY) (Diaphorobacter sp. (strain TPSY)).